The following is a 621-amino-acid chain: 1-deoxy-D-xylulose-5-phosphate synthase (621 aa).

Thiamine diphosphate-binding positions include His80 and 121 to 123 (GHS). Asp152 is a binding site for Mg(2+). Thiamine diphosphate contacts are provided by residues 153 to 154 (GA), Asn181, Tyr288, and Glu370. Asn181 lines the Mg(2+) pocket.

This sequence belongs to the transketolase family. DXPS subfamily. As to quaternary structure, homodimer. Mg(2+) is required as a cofactor. Requires thiamine diphosphate as cofactor.

It carries out the reaction D-glyceraldehyde 3-phosphate + pyruvate + H(+) = 1-deoxy-D-xylulose 5-phosphate + CO2. It participates in metabolic intermediate biosynthesis; 1-deoxy-D-xylulose 5-phosphate biosynthesis; 1-deoxy-D-xylulose 5-phosphate from D-glyceraldehyde 3-phosphate and pyruvate: step 1/1. Its function is as follows. Catalyzes the acyloin condensation reaction between C atoms 2 and 3 of pyruvate and glyceraldehyde 3-phosphate to yield 1-deoxy-D-xylulose-5-phosphate (DXP). In Shewanella frigidimarina (strain NCIMB 400), this protein is 1-deoxy-D-xylulose-5-phosphate synthase.